The sequence spans 154 residues: Ribosome maturation factor RimP (154 aa).

This sequence belongs to the RimP family.

The protein localises to the cytoplasm. In terms of biological role, required for maturation of 30S ribosomal subunits. The sequence is that of Ribosome maturation factor RimP from Salmonella agona (strain SL483).